A 143-amino-acid chain; its full sequence is Transcriptional regulator MraZ (143 aa).

SpoVT-AbrB domains follow at residues 5 to 47 (EYQH…PQDE) and 76 to 119 (AAEL…STEK).

The protein belongs to the MraZ family. In terms of assembly, forms oligomers.

Its subcellular location is the cytoplasm. It localises to the nucleoid. In Syntrophomonas wolfei subsp. wolfei (strain DSM 2245B / Goettingen), this protein is Transcriptional regulator MraZ.